Consider the following 598-residue polypeptide: Probable translation initiation factor IF-2 (598 aa).

The tr-type G domain occupies 3-225; the sequence is LRCPIVSVLG…GLAQKFLEQK (223 aa). A G1 region spans residues 12–19; sequence GHVDHGKT. 12–19 is a GTP binding site; that stretch reads GHVDHGKT. Residues 37 to 41 form a G2 region; sequence GITQH. The G3 stretch occupies residues 76–79; the sequence is DTPG. GTP contacts are provided by residues 76-80 and 130-133; these read DTPGH and NKLD. The G4 stretch occupies residues 130–133; sequence NKLD. Residues 200–202 are G5; that stretch reads SAM.

This sequence belongs to the TRAFAC class translation factor GTPase superfamily. Classic translation factor GTPase family. IF-2 subfamily.

Function in general translation initiation by promoting the binding of the formylmethionine-tRNA to ribosomes. Seems to function along with eIF-2. This is Probable translation initiation factor IF-2 from Methanococcus maripaludis (strain C6 / ATCC BAA-1332).